A 122-amino-acid polypeptide reads, in one-letter code: Large ribosomal subunit protein uL14 (122 aa).

This sequence belongs to the universal ribosomal protein uL14 family. Part of the 50S ribosomal subunit. Forms a cluster with proteins L3 and L19. In the 70S ribosome, L14 and L19 interact and together make contacts with the 16S rRNA in bridges B5 and B8.

Functionally, binds to 23S rRNA. Forms part of two intersubunit bridges in the 70S ribosome. The chain is Large ribosomal subunit protein uL14 from Magnetococcus marinus (strain ATCC BAA-1437 / JCM 17883 / MC-1).